We begin with the raw amino-acid sequence, 252 residues long: Chitooligosaccharide deacetylase (252 aa).

Positions 61 and 125 each coordinate Mg(2+).

The protein belongs to the YdjC deacetylase family. ChbG subfamily. Homodimer. Mg(2+) is required as a cofactor.

The protein resides in the cytoplasm. It catalyses the reaction N,N'-diacetylchitobiose + H2O = N-acetyl-beta-D-glucosaminyl-(1-&gt;4)-D-glucosamine + acetate. The enzyme catalyses diacetylchitobiose-6'-phosphate + H2O = N'-monoacetylchitobiose-6'-phosphate + acetate. It participates in glycan degradation; chitin degradation. Involved in the degradation of chitin. ChbG is essential for growth on the acetylated chitooligosaccharides chitobiose and chitotriose but is dispensable for growth on cellobiose and chitosan dimer, the deacetylated form of chitobiose. Deacetylation of chitobiose-6-P and chitotriose-6-P is necessary for both the activation of the chb promoter by the regulatory protein ChbR and the hydrolysis of phosphorylated beta-glucosides by the phospho-beta-glucosidase ChbF. Catalyzes the removal of only one acetyl group from chitobiose-6-P to yield monoacetylchitobiose-6-P, the inducer of ChbR and the substrate of ChbF. The polypeptide is Chitooligosaccharide deacetylase (Klebsiella pneumoniae subsp. pneumoniae (strain ATCC 700721 / MGH 78578)).